We begin with the raw amino-acid sequence, 1130 residues long: Serine/threonine-protein kinase LATS1 (1130 aa).

Residues 1 to 11 are compositionally biased toward basic and acidic residues; it reads MKRSEKPEGYR. Residues 1 to 71 are disordered; sequence MKRSEKPEGY…PRQVRNPPKF (71 aa). Positions 19–30 are enriched in polar residues; that stretch reads PASNYTVSSRQM. Residues 46–64 show a composition bias toward basic and acidic residues; the sequence is DAAKAEHNMSKMSTEDPRQ. Residues 100 to 141 form the UBA domain; sequence EVNPQMLQDLQAAGFDEDMVIQALQKTNNRSIEAAIEFISKM. The tract at residues 149–276 is disordered; the sequence is EQMAAAAARP…SWEPNSQTKR (128 aa). A compositionally biased stretch (polar residues) spans 167–179; the sequence is NVQQSVNRKQSWK. Pro residues predominate over residues 235–268; it reads NPPPPPQVRSVTPPPPPRGQTPPPRGTTPPPPSW. Thr-246 carries the phosphothreonine modification. A Phosphoserine modification is found at Ser-278. Disordered regions lie at residues 294 to 321, 365 to 405, 432 to 484, and 515 to 631; these read GAWQ…RGIS, AGTV…NGSI, NWPQ…PSAT, and THPS…ESRI. Pro residues predominate over residues 300–312; it reads YPPPPLNTSPMNP. Positions 373-376 match the PPxY motif 1 motif; the sequence is PPPY. Residues 381–405 show a composition bias toward polar residues; it reads ANGQSPSALQTGGSAAPSSYTNGSI. Residues 434–447 are compositionally biased toward low complexity; sequence PQSSSAPAQSSPSS. Residues 454–482 are compositionally biased toward polar residues; it reads WQPNIPVRSNSFNNPLGNRASHSANSQPS. Ser-464 is subject to Phosphoserine; by NUAK1 and NUAK2. The interval 526 to 655 is interaction with YAP1; the sequence is TVQPSPFPEG…HVENVLKSHQ (130 aa). Residues 556–559 carry the PPxY motif 2 motif; it reads PPPY. The span at 579–609 shows a compositional bias: basic and acidic residues; it reads PSKEDQPSLPKEDESEKSYENVDSGDKEKKQ. Phosphoserine is present on Ser-613. Residues 621-630 show a composition bias toward basic and acidic residues; that stretch reads KKDEERRESR. Ser-674 bears the Phosphoserine mark. Positions 705–1010 constitute a Protein kinase domain; it reads FVKIKTLGIG…ADEIKAHPFF (306 aa). ATP-binding positions include 711–719 and Lys-734; that span reads LGIGAFGEV. Asp-828 (proton acceptor) is an active-site residue. Ser-909 is modified (phosphoserine; by STK3/MST2). The AGC-kinase C-terminal domain maps to 1011-1090; the sequence is KTIDFSSDLR…RRFFDDNGYP (80 aa). Thr-1079 bears the Phosphothreonine; by STK3/MST2 mark. Positions 1104 to 1130 are disordered; sequence SQGSEQQSDEDDQNTGSEIKNRDLVYV.

Belongs to the protein kinase superfamily. AGC Ser/Thr protein kinase family. Complexes with CDK1 in early mitosis. LATS1-associated CDK1 has no mitotic cyclin partner and no apparent kinase activity. Binds phosphorylated ZYX, locating this protein to the mitotic spindle and suggesting a role for actin regulatory proteins during mitosis. Binds to and colocalizes with LIMK1 at the actomyosin contractile ring during cytokinesis. Interacts (via PPxY motif 2) with YAP1 (via WW domains). Interacts with MOB1A and MOB1B. Interacts with LIMD1, WTIP and AJUBA. Interacts with ESR1, DCAF1 and DCAF13; probably recruits DCAF1 and DCAF13 to ESR1 to promote ESR1 ubiquitination and ubiquitin-mediated proteasomal degradation. Interacts with STK3/MST2; this interaction is inhibited in the presence of DLG5. Interacts with SCRIB in the presence of DLG5. Interacts with WWTR1/TAZ. Interacts with WWC1, WWC2 and WWC3 (via their WW domains). Mg(2+) serves as cofactor. Autophosphorylated and phosphorylated during M-phase of the cell cycle. Phosphorylated by STK3/MST2 at Ser-909 and Thr-1079, which results in its activation. Phosphorylated by MAP4Ks; in parallel to STK3/MST2 and resulting to its activation. Phosphorylation at Ser-464 by NUAK1 and NUAK2 leads to decreased protein level and is required to regulate cellular senescence and cellular ploidy. In terms of tissue distribution, expressed in all adult tissues examined except for lung and kidney.

It localises to the cytoplasm. Its subcellular location is the cytoskeleton. The protein localises to the microtubule organizing center. The protein resides in the centrosome. It is found in the spindle. It localises to the midbody. Its subcellular location is the spindle pole body. The enzyme catalyses L-seryl-[protein] + ATP = O-phospho-L-seryl-[protein] + ADP + H(+). It catalyses the reaction L-threonyl-[protein] + ATP = O-phospho-L-threonyl-[protein] + ADP + H(+). Functionally, negative regulator of YAP1 in the Hippo signaling pathway that plays a pivotal role in organ size control and tumor suppression by restricting proliferation and promoting apoptosis. The core of this pathway is composed of a kinase cascade wherein STK3/MST2 and STK4/MST1, in complex with its regulatory protein SAV1, phosphorylates and activates LATS1/2 in complex with its regulatory protein MOB1, which in turn phosphorylates and inactivates YAP1 oncoprotein and WWTR1/TAZ. Phosphorylation of YAP1 by LATS1 inhibits its translocation into the nucleus to regulate cellular genes important for cell proliferation, cell death, and cell migration. Acts as a tumor suppressor which plays a critical role in maintenance of ploidy through its actions in both mitotic progression and the G1 tetraploidy checkpoint. Negatively regulates G2/M transition by down-regulating CDK1 kinase activity. Involved in the control of p53 expression. Affects cytokinesis by regulating actin polymerization through negative modulation of LIMK1. May also play a role in endocrine function. Plays a role in mammary gland epithelial cell differentiation, both through the Hippo signaling pathway and the intracellular estrogen receptor signaling pathway by promoting the degradation of ESR1. Acts as an activator of the NLRP3 inflammasome by mediating phosphorylation of 'Ser-265' of NLRP3 following NLRP3 palmitoylation, promoting NLRP3 activation by NEK7. The chain is Serine/threonine-protein kinase LATS1 from Homo sapiens (Human).